A 250-amino-acid chain; its full sequence is Isoprenyl transferase (250 aa).

Aspartate 26 is a catalytic residue. Aspartate 26 provides a ligand contact to Mg(2+). Substrate contacts are provided by residues 27 to 30, tryptophan 31, arginine 39, histidine 43, and 71 to 73; these read GNGR and STE. The Proton acceptor role is filled by asparagine 74. Residues tryptophan 75, arginine 77, arginine 198, and 204–206 each bind substrate; that span reads RLS. Glutamate 217 serves as a coordination point for Mg(2+).

The protein belongs to the UPP synthase family. In terms of assembly, homodimer. The cofactor is Mg(2+).

Its function is as follows. Catalyzes the condensation of isopentenyl diphosphate (IPP) with allylic pyrophosphates generating different type of terpenoids. The protein is Isoprenyl transferase of Streptococcus agalactiae serotype V (strain ATCC BAA-611 / 2603 V/R).